We begin with the raw amino-acid sequence, 141 residues long: Small ribosomal subunit protein uS12 (141 aa).

A disordered region spans residues 118–141 (TGVDKRRQQRSAYGAKRPKADKKK).

The protein belongs to the universal ribosomal protein uS12 family. As to quaternary structure, part of the 30S ribosomal subunit. Contacts proteins S8 and S17. May interact with IF1 in the 30S initiation complex.

Its function is as follows. With S4 and S5 plays an important role in translational accuracy. Functionally, interacts with and stabilizes bases of the 16S rRNA that are involved in tRNA selection in the A site and with the mRNA backbone. Located at the interface of the 30S and 50S subunits, it traverses the body of the 30S subunit contacting proteins on the other side and probably holding the rRNA structure together. The combined cluster of proteins S8, S12 and S17 appears to hold together the shoulder and platform of the 30S subunit. The chain is Small ribosomal subunit protein uS12 from Mycoplasmoides gallisepticum (strain R(low / passage 15 / clone 2)) (Mycoplasma gallisepticum).